Here is a 370-residue protein sequence, read N- to C-terminus: UDP-N-acetylglucosamine--N-acetylmuramyl-(pentapeptide) pyrophosphoryl-undecaprenol N-acetylglucosamine transferase (370 aa).

Residues 15–17 (TGG), Asn129, Arg171, Ser200, Ile256, and Gln301 contribute to the UDP-N-acetyl-alpha-D-glucosamine site.

The protein belongs to the glycosyltransferase 28 family. MurG subfamily.

The protein resides in the cell membrane. The enzyme catalyses di-trans,octa-cis-undecaprenyl diphospho-N-acetyl-alpha-D-muramoyl-L-alanyl-D-glutamyl-meso-2,6-diaminopimeloyl-D-alanyl-D-alanine + UDP-N-acetyl-alpha-D-glucosamine = di-trans,octa-cis-undecaprenyl diphospho-[N-acetyl-alpha-D-glucosaminyl-(1-&gt;4)]-N-acetyl-alpha-D-muramoyl-L-alanyl-D-glutamyl-meso-2,6-diaminopimeloyl-D-alanyl-D-alanine + UDP + H(+). Its pathway is cell wall biogenesis; peptidoglycan biosynthesis. In terms of biological role, cell wall formation. Catalyzes the transfer of a GlcNAc subunit on undecaprenyl-pyrophosphoryl-MurNAc-pentapeptide (lipid intermediate I) to form undecaprenyl-pyrophosphoryl-MurNAc-(pentapeptide)GlcNAc (lipid intermediate II). The polypeptide is UDP-N-acetylglucosamine--N-acetylmuramyl-(pentapeptide) pyrophosphoryl-undecaprenol N-acetylglucosamine transferase (Caldicellulosiruptor saccharolyticus (strain ATCC 43494 / DSM 8903 / Tp8T 6331)).